We begin with the raw amino-acid sequence, 281 residues long: Probable endonuclease 4 (281 aa).

H69, H109, E145, D179, H182, H216, D229, H231, and E261 together coordinate Zn(2+).

It belongs to the AP endonuclease 2 family. It depends on Zn(2+) as a cofactor.

It catalyses the reaction Endonucleolytic cleavage to 5'-phosphooligonucleotide end-products.. Functionally, endonuclease IV plays a role in DNA repair. It cleaves phosphodiester bonds at apurinic or apyrimidinic (AP) sites, generating a 3'-hydroxyl group and a 5'-terminal sugar phosphate. The protein is Probable endonuclease 4 of Buchnera aphidicola subsp. Acyrthosiphon pisum (strain APS) (Acyrthosiphon pisum symbiotic bacterium).